We begin with the raw amino-acid sequence, 651 residues long: Cylicin-1 (651 aa).

2 disordered regions span residues 110-241 (LKKA…CSEN) and 267-615 (NYSQ…CEPS). Basic and acidic residues-rich tracts occupy residues 111–129 (KKAEYKKSKDEKGGTPLKK) and 146–173 (QIVEEKTKRQNEADKTPLKSSHENEQSK). Positions 186–195 (QNSKTVSKNC) are enriched in polar residues. The span at 196-205 (SQKDKKDSKN) shows a compositional bias: basic and acidic residues. Polar residues predominate over residues 230 to 241 (SNDPISEICSEN). Low complexity predominate over residues 271-281 (NNSKNYSLKYT). 8 tandem repeats follow at residues 278 to 305 (LKYTKYTKKDTKKNAKKSSDAESEDSKD), 306 to 342 (AKKDSKKVKKNVKKDDKKKDVKKDTESTDAESGDSKD), 343 to 379 (ERKDTKKDKKKLKKDDKKKDTKKYPESTDTESGDAKD), 380 to 417 (ARNDSRNLKKASKNDDKKKDAKKITFSTDSESELESKE), 418 to 453 (SQKDEKKDKKDSKTDNKKSVKNDEESTDADSEPKGD), 454 to 491 (SKKGKKDEKKGKKDSKKDDKKKDAKKNAESTEMESDLE), 492 to 531 (LKKDKKHSKEKKGSKKDIKKDARKDTESTDAEFDESSKTG), and 532 to 553 (FKTSTKIKGSDTESEESLYKPG). Basic and acidic residues-rich tracts occupy residues 284–308 (TKKDTKKNAKKSSDAESEDSKDAKK), 318–331 (KKDDKKKDVKKDTE), 338–368 (GDSKDERKDTKKDKKKLKKDDKKKDTKKYPE), 375–402 (GDAKDARNDSRNLKKASKNDDKKKDAKK), 413–441 (LESKESQKDEKKDKKDSKTDNKKSVKNDE), and 448–482 (SEPKGDSKKGKKDEKKGKKDSKKDDKKKDAKKNAE). Basic residues predominate over residues 495–505 (DKKHSKEKKGS). Basic and acidic residues predominate over residues 506–518 (KKDIKKDARKDTE). The span at 529-538 (KTGFKTSTKI) shows a compositional bias: polar residues. The tract at residues 532–553 (FKTSTKIKGSDTESEESLYKPG) is 8 X approximate tandem repeats. The span at 587 to 607 (TFNEKGEKASTGRVPPSREKP) shows a compositional bias: basic and acidic residues.

Interacts with proteins of spermatozoa head including ACTL7A, CCIN, FAM209A and SPACA1; the interactions may be necessary for proper acrosome attachment to the nuclear envelope. As to expression, testis.

Its subcellular location is the cytoplasm. It localises to the cytoskeleton. It is found in the perinuclear theca. The protein resides in the calyx. Functionally, plays a role in the establishment of normal sperm morphology during spermatogenesis and is required for acrosome attachment to the nuclear envelope. The protein is Cylicin-1 (CYLC1) of Homo sapiens (Human).